Consider the following 313-residue polypeptide: MSHSRHRAEAPPLQREDSGTFSLGKMITAKPGKTPIQVLHEYGTKTKNIPVYECERSDVQVHVPTFTFRVTVGDITCTGEGTSKKLAKHRAAEAAINILKANASICFAVPDPLMPDPSKQPKNQLNPIGSLQELAIHHGWRLPEYTLSQEGGPAHKREYTTICRLESFMETGKGASKKQAKRNAAEKFLAKFSNISPENHISLTNVVGHSLGCTWHSLRNSPGEKINLLKRSLLSLPNTDYIQLLSEIAKEQGFSITYLDIEELSANGQYQCLAELSTSPITVCHGSGISCGNAQSDAAHNALQYLKIIAERK.

The segment at 1 to 20 (MSHSRHRAEAPPLQREDSGT) is disordered. Sufficient for self-association and interaction with TARBP2 stretches follow at residues 1 to 103 (MSHS…KANA), 102 to 195 (NASI…FSNI), and 195 to 313 (ISPE…AERK). Residue Ser18 is modified to Phosphoserine. DRBM domains lie at 34–101 (TPIQ…ILKA), 126–194 (NPIG…KFSN), and 240–308 (DYIQ…YLKI). 3 positions are modified to phosphoserine: Ser167, Ser246, and Ser287.

This sequence belongs to the PRKRA family. In terms of assembly, homodimer. Interacts with EIF2AK2/PKR through its DRBM domains. Interacts with DICER1, AGO2 and TARBP2. Also able to interact with dsRNA. Interacts with UBC9. Forms a complex with UBC9 and p53/TP53. Interacts with DUS2L (via DRBM domain). In terms of processing, phosphorylated at Ser-246 in unstressed cells and at Ser-287 in stressed cells. Phosphorylation at Ser-246 appears to be a prerequisite for subsequent phosphorylation at Ser-287. Phosphorylation at Ser-246 and Ser-287 are necessary for activation of EIF2AK2/PKR under conditions of stress.

It is found in the cytoplasm. The protein resides in the perinuclear region. Its function is as follows. Activates EIF2AK2/PKR in the absence of double-stranded RNA (dsRNA), leading to phosphorylation of EIF2S1/EFI2-alpha and inhibition of translation and induction of apoptosis. Required for siRNA production by DICER1 and for subsequent siRNA-mediated post-transcriptional gene silencing. Does not seem to be required for processing of pre-miRNA to miRNA by DICER1. Promotes UBC9-p53/TP53 association, sumoylation and phosphorylation of p53/TP53 at 'Lys-386' at 'Ser-392' respectively and enhances its activity in a EIF2AK2/PKR-dependent manner. The polypeptide is Interferon-inducible double-stranded RNA-dependent protein kinase activator A (Prkra) (Rattus norvegicus (Rat)).